Consider the following 108-residue polypeptide: Putative septation protein SpoVG (108 aa).

The protein belongs to the SpoVG family.

Could be involved in septation. This is Putative septation protein SpoVG from Bdellovibrio bacteriovorus (strain ATCC 15356 / DSM 50701 / NCIMB 9529 / HD100).